The primary structure comprises 104 residues: Large ribosomal subunit protein bL21 (104 aa).

This sequence belongs to the bacterial ribosomal protein bL21 family. In terms of assembly, part of the 50S ribosomal subunit. Contacts protein L20.

In terms of biological role, this protein binds to 23S rRNA in the presence of protein L20. The polypeptide is Large ribosomal subunit protein bL21 (Tropheryma whipplei (strain TW08/27) (Whipple's bacillus)).